Reading from the N-terminus, the 234-residue chain is MINFIVGAIGLLIASIYDLKSREIEDYVWVSMVIFGLIYNGYLSFISHDMLYVIQSIVGFIVCFFLGFFMFLLGVGGGDGKLIMGLGALIPKYNMPIHTPLGAILNYLYLPSFPIMVVINAMFFSITLPIIIFLRNVIRGVKPKTKKEVLCMFLGEKMKVSEAIKKERLILGNHENLKLLPSAEKDCDFSKFDKNEEIWVTPAIPFVVPIFLSYLLTSIIGDKIIGIFLSVFGL.

Residue Met-1 is a topological domain, cytoplasmic. The chain crosses the membrane as a helical span at residues 2 to 18 (INFIVGAIGLLIASIYD). Residues 19–23 (LKSRE) lie on the Extracellular side of the membrane. The helical transmembrane segment at 24–46 (IEDYVWVSMVIFGLIYNGYLSFI) threads the bilayer. The Cytoplasmic segment spans residues 47 to 49 (SHD). Residues 50–72 (MLYVIQSIVGFIVCFFLGFFMFL) traverse the membrane as a helical segment. At 73-78 (LGVGGG) the chain is on the extracellular side. Residues 79–89 (DGKLIMGLGAL) traverse the membrane as a helical segment. The Cytoplasmic portion of the chain corresponds to 90 to 110 (IPKYNMPIHTPLGAILNYLYL). The helical transmembrane segment at 111 to 139 (PSFPIMVVINAMFFSITLPIIIFLRNVIR) threads the bilayer. Over 140-205 (GVKPKTKKEV…EEIWVTPAIP (66 aa)) the chain is Extracellular. The chain crosses the membrane as a helical span at residues 206–217 (FVVPIFLSYLLT). Topologically, residues 218-234 (SIIGDKIIGIFLSVFGL) are cytoplasmic.

This sequence belongs to the peptidase A24 family. Archaeal preflagellin peptidase subfamily.

Its subcellular location is the cell membrane. The enzyme catalyses Cleaves the signal peptide of 3 to 12 amino acids from the N-terminal of preflagellin, usually at Arg-Gly-|- or Lys-Gly-|-, to release flagellin.. Its function is as follows. Cleaves the N-terminal leader peptide from preflagellins. This is Preflagellin peptidase (flaK) from Methanocaldococcus jannaschii (strain ATCC 43067 / DSM 2661 / JAL-1 / JCM 10045 / NBRC 100440) (Methanococcus jannaschii).